Consider the following 1404-residue polypeptide: DNA-directed RNA polymerase subunit beta' (1404 aa).

Cysteine 70, cysteine 72, cysteine 85, and cysteine 88 together coordinate Zn(2+). Mg(2+) contacts are provided by aspartate 458, aspartate 460, and aspartate 462. 4 residues coordinate Zn(2+): cysteine 813, cysteine 887, cysteine 894, and cysteine 897. Positions 1377 to 1404 are disordered; it reads ERRAIAESEAAELEASQAETSDENAAAE.

The protein belongs to the RNA polymerase beta' chain family. The RNAP catalytic core consists of 2 alpha, 1 beta, 1 beta' and 1 omega subunit. When a sigma factor is associated with the core the holoenzyme is formed, which can initiate transcription. Requires Mg(2+) as cofactor. Zn(2+) serves as cofactor.

The enzyme catalyses RNA(n) + a ribonucleoside 5'-triphosphate = RNA(n+1) + diphosphate. Functionally, DNA-dependent RNA polymerase catalyzes the transcription of DNA into RNA using the four ribonucleoside triphosphates as substrates. This is DNA-directed RNA polymerase subunit beta' from Polaromonas naphthalenivorans (strain CJ2).